A 313-amino-acid polypeptide reads, in one-letter code: Ribosomal RNA small subunit methyltransferase H (313 aa).

Residues 35-37 (GGH), Asp-55, Phe-80, Asp-102, and Gln-109 contribute to the S-adenosyl-L-methionine site.

It belongs to the methyltransferase superfamily. RsmH family.

The protein resides in the cytoplasm. It catalyses the reaction cytidine(1402) in 16S rRNA + S-adenosyl-L-methionine = N(4)-methylcytidine(1402) in 16S rRNA + S-adenosyl-L-homocysteine + H(+). Specifically methylates the N4 position of cytidine in position 1402 (C1402) of 16S rRNA. The sequence is that of Ribosomal RNA small subunit methyltransferase H from Shewanella woodyi (strain ATCC 51908 / MS32).